The chain runs to 156 residues: 6,7-dimethyl-8-ribityllumazine synthase (156 aa).

5-amino-6-(D-ribitylamino)uracil contacts are provided by residues phenylalanine 23, 57–59 (AYE), and 81–83 (AII). (2S)-2-hydroxy-3-oxobutyl phosphate is bound at residue 86 to 87 (GT). Residue histidine 89 is the Proton donor of the active site. Phenylalanine 114 contributes to the 5-amino-6-(D-ribitylamino)uracil binding site. Arginine 128 contacts (2S)-2-hydroxy-3-oxobutyl phosphate.

It belongs to the DMRL synthase family.

It carries out the reaction (2S)-2-hydroxy-3-oxobutyl phosphate + 5-amino-6-(D-ribitylamino)uracil = 6,7-dimethyl-8-(1-D-ribityl)lumazine + phosphate + 2 H2O + H(+). It participates in cofactor biosynthesis; riboflavin biosynthesis; riboflavin from 2-hydroxy-3-oxobutyl phosphate and 5-amino-6-(D-ribitylamino)uracil: step 1/2. Catalyzes the formation of 6,7-dimethyl-8-ribityllumazine by condensation of 5-amino-6-(D-ribitylamino)uracil with 3,4-dihydroxy-2-butanone 4-phosphate. This is the penultimate step in the biosynthesis of riboflavin. The polypeptide is 6,7-dimethyl-8-ribityllumazine synthase (Helicobacter pylori (strain Shi470)).